A 361-amino-acid polypeptide reads, in one-letter code: MTRAFNFSAGPATLPESVLRQAQAEMVEWNGVGASIVEISHRSADFMAVAAAAEADLRSLLSIPDDYAVLFTAGGATTIQALLPLNFAAPGQAADYVITGHWGKTAIKQAATSVDARIAADAQADGFVDIPPAASWTLSPHSAYVHITANETIHGVEFRDTPDVGTLPLFADFSSSIASEPLDISRYGLIYAGAQKNLGPVGISVVIVRRDLLERAGQPRADIFNYASHAARDSMLNTPPTWNWYVLGLTVKWMLEQGGVQEFARRNAEKAALVYGAIDGSGGFYRNLIKPAVRSRMNIPFFLPDEQLDALFVSESKAAGLLALKGHKAVGGIRASLYNAMPVAGAQALAAFMHDFQQRHG.

Position 42 (Arg42) interacts with L-glutamate. Residues 76-77 (AT), Trp102, Thr152, Asp172, and Gln195 contribute to the pyridoxal 5'-phosphate site. The residue at position 196 (Lys196) is an N6-(pyridoxal phosphate)lysine. 237–238 (NT) serves as a coordination point for pyridoxal 5'-phosphate.

Belongs to the class-V pyridoxal-phosphate-dependent aminotransferase family. SerC subfamily. Homodimer. Pyridoxal 5'-phosphate is required as a cofactor.

The protein resides in the cytoplasm. It carries out the reaction O-phospho-L-serine + 2-oxoglutarate = 3-phosphooxypyruvate + L-glutamate. The enzyme catalyses 4-(phosphooxy)-L-threonine + 2-oxoglutarate = (R)-3-hydroxy-2-oxo-4-phosphooxybutanoate + L-glutamate. The protein operates within amino-acid biosynthesis; L-serine biosynthesis; L-serine from 3-phospho-D-glycerate: step 2/3. It participates in cofactor biosynthesis; pyridoxine 5'-phosphate biosynthesis; pyridoxine 5'-phosphate from D-erythrose 4-phosphate: step 3/5. Functionally, catalyzes the reversible conversion of 3-phosphohydroxypyruvate to phosphoserine and of 3-hydroxy-2-oxo-4-phosphonooxybutanoate to phosphohydroxythreonine. The sequence is that of Phosphoserine aminotransferase from Xanthomonas euvesicatoria pv. vesicatoria (strain 85-10) (Xanthomonas campestris pv. vesicatoria).